Here is a 57-residue protein sequence, read N- to C-terminus: DNA gyrase inhibitor YacG (57 aa).

Zn(2+) is bound by residues C10, C13, C25, and C29.

Belongs to the DNA gyrase inhibitor YacG family. In terms of assembly, interacts with GyrB. It depends on Zn(2+) as a cofactor.

Its function is as follows. Inhibits all the catalytic activities of DNA gyrase by preventing its interaction with DNA. Acts by binding directly to the C-terminal domain of GyrB, which probably disrupts DNA binding by the gyrase. The chain is DNA gyrase inhibitor YacG from Brucella melitensis biotype 1 (strain ATCC 23456 / CCUG 17765 / NCTC 10094 / 16M).